The following is a 127-amino-acid chain: MLPTRHRMTKSSEFRQTVKRGVRTTHADLVIHLRRGCPDSACEQVEGPKVGLIVGKSVGGAVVRHRVSRRLRHAAAELLPKLEPVDRMVIRALPSSSTALSASLRQQLRDGIDRSARRQEPAAERQR.

A disordered region spans residues 99-127 (ALSASLRQQLRDGIDRSARRQEPAAERQR). Basic and acidic residues predominate over residues 107-127 (QLRDGIDRSARRQEPAAERQR).

This sequence belongs to the RnpA family. In terms of assembly, consists of a catalytic RNA component (M1 or rnpB) and a protein subunit.

The enzyme catalyses Endonucleolytic cleavage of RNA, removing 5'-extranucleotides from tRNA precursor.. Its function is as follows. RNaseP catalyzes the removal of the 5'-leader sequence from pre-tRNA to produce the mature 5'-terminus. It can also cleave other RNA substrates such as 4.5S RNA. The protein component plays an auxiliary but essential role in vivo by binding to the 5'-leader sequence and broadening the substrate specificity of the ribozyme. This Mycobacteroides abscessus (strain ATCC 19977 / DSM 44196 / CCUG 20993 / CIP 104536 / JCM 13569 / NCTC 13031 / TMC 1543 / L948) (Mycobacterium abscessus) protein is Ribonuclease P protein component.